The sequence spans 842 residues: Glycogen phosphorylase, muscle form (842 aa).

Ser2 bears the N-acetylserine mark. Phosphoserine; by PHK; in form phosphorylase A is present on Ser15. AMP contacts are provided by Asp43 and Tyr76. Phosphotyrosine occurs at positions 204 and 227. Residue 310–319 coordinates AMP; sequence RRFKSSKFGC. Ser430 is subject to Phosphoserine. Phosphotyrosine is present on Tyr473. Lys681 carries the N6-(pyridoxal phosphate)lysine modification. Ser747 and Ser748 each carry phosphoserine.

This sequence belongs to the glycogen phosphorylase family. Homodimer. Homotetramer; to form the enzymatically active phosphorylase A. It depends on pyridoxal 5'-phosphate as a cofactor. Post-translationally, phosphorylation of Ser-15 converts phosphorylase B (unphosphorylated) to phosphorylase A.

The catalysed reaction is [(1-&gt;4)-alpha-D-glucosyl](n) + phosphate = [(1-&gt;4)-alpha-D-glucosyl](n-1) + alpha-D-glucose 1-phosphate. Allosterically regulated through the non-covalent binding of metabolites, being activated by AMP and inhibited by ATP, ADP, and glucose-6-phosphate. The activity is also controlled by post-translational modifications including phosphorylation. Allosteric enzyme that catalyzes the rate-limiting step in glycogen catabolism, the phosphorolytic cleavage of glycogen to produce glucose-1-phosphate, and plays a central role in maintaining cellular and organismal glucose homeostasis. In Ovis aries (Sheep), this protein is Glycogen phosphorylase, muscle form.